Reading from the N-terminus, the 181-residue chain is NAD(P)H-quinone oxidoreductase subunit I, chloroplastic (181 aa).

2 4Fe-4S ferredoxin-type domains span residues 55–84 (GRIH…VDWE) and 95–124 (KSYS…MTEE). [4Fe-4S] cluster is bound by residues cysteine 64, cysteine 67, cysteine 70, cysteine 74, cysteine 104, cysteine 107, cysteine 110, and cysteine 114.

Belongs to the complex I 23 kDa subunit family. In terms of assembly, NDH is composed of at least 16 different subunits, 5 of which are encoded in the nucleus. Requires [4Fe-4S] cluster as cofactor.

The protein resides in the plastid. The protein localises to the chloroplast thylakoid membrane. It carries out the reaction a plastoquinone + NADH + (n+1) H(+)(in) = a plastoquinol + NAD(+) + n H(+)(out). The catalysed reaction is a plastoquinone + NADPH + (n+1) H(+)(in) = a plastoquinol + NADP(+) + n H(+)(out). Functionally, NDH shuttles electrons from NAD(P)H:plastoquinone, via FMN and iron-sulfur (Fe-S) centers, to quinones in the photosynthetic chain and possibly in a chloroplast respiratory chain. The immediate electron acceptor for the enzyme in this species is believed to be plastoquinone. Couples the redox reaction to proton translocation, and thus conserves the redox energy in a proton gradient. The protein is NAD(P)H-quinone oxidoreductase subunit I, chloroplastic of Physcomitrium patens (Spreading-leaved earth moss).